The chain runs to 167 residues: Phosphopantetheine adenylyltransferase (167 aa).

Position 13 (T13) interacts with substrate. Residues 13-14 (TF) and H21 contribute to the ATP site. 3 residues coordinate substrate: K45, L78, and R92. Residues 93-95 (GLR), E103, and 128-134 (TQFISSS) each bind ATP.

This sequence belongs to the bacterial CoaD family. As to quaternary structure, homohexamer. The cofactor is Mg(2+).

The protein localises to the cytoplasm. It catalyses the reaction (R)-4'-phosphopantetheine + ATP + H(+) = 3'-dephospho-CoA + diphosphate. It functions in the pathway cofactor biosynthesis; coenzyme A biosynthesis; CoA from (R)-pantothenate: step 4/5. Its function is as follows. Reversibly transfers an adenylyl group from ATP to 4'-phosphopantetheine, yielding dephospho-CoA (dPCoA) and pyrophosphate. The sequence is that of Phosphopantetheine adenylyltransferase from Wolbachia sp. subsp. Brugia malayi (strain TRS).